A 282-amino-acid polypeptide reads, in one-letter code: Elongation factor Ts (282 aa).

The tract at residues 79–82 (TDFV) is involved in Mg(2+) ion dislocation from EF-Tu.

This sequence belongs to the EF-Ts family.

The protein resides in the cytoplasm. Its function is as follows. Associates with the EF-Tu.GDP complex and induces the exchange of GDP to GTP. It remains bound to the aminoacyl-tRNA.EF-Tu.GTP complex up to the GTP hydrolysis stage on the ribosome. The polypeptide is Elongation factor Ts (Shewanella loihica (strain ATCC BAA-1088 / PV-4)).